We begin with the raw amino-acid sequence, 232 residues long: Ion-translocating oxidoreductase complex subunit E (232 aa).

6 helical membrane-spanning segments follow: residues 18–38, 39–59, 69–89, 93–113, 128–148, and 182–202; these read ALVQ…VTNG, LGLG…VSII, IPIF…LMNA, ELYQ…AIIG, AFDG…LGAM, and PFLL…LIAA.

It belongs to the NqrDE/RnfAE family. In terms of assembly, the complex is composed of six subunits: RnfA, RnfB, RnfC, RnfD, RnfE and RnfG.

Its subcellular location is the cell inner membrane. In terms of biological role, part of a membrane-bound complex that couples electron transfer with translocation of ions across the membrane. In Pseudoalteromonas atlantica (strain T6c / ATCC BAA-1087), this protein is Ion-translocating oxidoreductase complex subunit E.